A 177-amino-acid polypeptide reads, in one-letter code: CASP-like protein 5A2 (177 aa).

Residues M1–T36 lie on the Cytoplasmic side of the membrane. The helical transmembrane segment at I37–M57 threads the bilayer. Over V58 to A68 the chain is Extracellular. The N-linked (GlcNAc...) asparagine glycan is linked to N62. Residues F69–I89 traverse the membrane as a helical segment. Topologically, residues D90–S103 are cytoplasmic. Residues L104–A124 form a helical membrane-spanning segment. Residues C125–T153 lie on the Extracellular side of the membrane. A helical membrane pass occupies residues A154–L174. Residues A175 to R177 lie on the Cytoplasmic side of the membrane.

Belongs to the Casparian strip membrane proteins (CASP) family. Homodimer and heterodimers.

It localises to the cell membrane. In Ginkgo biloba (Ginkgo), this protein is CASP-like protein 5A2.